The following is a 223-amino-acid chain: Phosphoribosylformylglycinamidine synthase subunit PurQ (223 aa).

The 221-residue stretch at 3 to 223 (FAVLVFPGSN…MVKSWREQHV (221 aa)) folds into the Glutamine amidotransferase type-1 domain. The active-site Nucleophile is C85. Catalysis depends on residues H193 and E195.

In terms of assembly, part of the FGAM synthase complex composed of 1 PurL, 1 PurQ and 2 PurS subunits.

It is found in the cytoplasm. The catalysed reaction is N(2)-formyl-N(1)-(5-phospho-beta-D-ribosyl)glycinamide + L-glutamine + ATP + H2O = 2-formamido-N(1)-(5-O-phospho-beta-D-ribosyl)acetamidine + L-glutamate + ADP + phosphate + H(+). It carries out the reaction L-glutamine + H2O = L-glutamate + NH4(+). The protein operates within purine metabolism; IMP biosynthesis via de novo pathway; 5-amino-1-(5-phospho-D-ribosyl)imidazole from N(2)-formyl-N(1)-(5-phospho-D-ribosyl)glycinamide: step 1/2. Its function is as follows. Part of the phosphoribosylformylglycinamidine synthase complex involved in the purines biosynthetic pathway. Catalyzes the ATP-dependent conversion of formylglycinamide ribonucleotide (FGAR) and glutamine to yield formylglycinamidine ribonucleotide (FGAM) and glutamate. The FGAM synthase complex is composed of three subunits. PurQ produces an ammonia molecule by converting glutamine to glutamate. PurL transfers the ammonia molecule to FGAR to form FGAM in an ATP-dependent manner. PurS interacts with PurQ and PurL and is thought to assist in the transfer of the ammonia molecule from PurQ to PurL. The polypeptide is Phosphoribosylformylglycinamidine synthase subunit PurQ (Staphylococcus aureus (strain bovine RF122 / ET3-1)).